The chain runs to 152 residues: Superoxide dismutase [Cu-Zn] 4AP (152 aa).

The Cu cation site is built by H45, H47, and H62. The cysteines at positions 56 and 145 are disulfide-linked. Residues H62, H70, H79, and D82 each contribute to the Zn(2+) site. H119 contributes to the Cu cation binding site.

The protein belongs to the Cu-Zn superoxide dismutase family. In terms of assembly, homodimer. The cofactor is Cu cation. Requires Zn(2+) as cofactor.

The protein localises to the cytoplasm. It carries out the reaction 2 superoxide + 2 H(+) = H2O2 + O2. Its function is as follows. Destroys radicals which are normally produced within the cells and which are toxic to biological systems. The polypeptide is Superoxide dismutase [Cu-Zn] 4AP (SODCC.2) (Zea mays (Maize)).